Consider the following 41-residue polypeptide: U3-theraphotoxin-Hs1a (41 aa).

3 cysteine pairs are disulfide-bonded: C2/C16, C9/C37, and C17/C40.

This sequence belongs to the neurotoxin 14 (magi-1) family. 01 (HNTX-16) subfamily. As to expression, expressed by the venom gland.

The protein localises to the secreted. Its function is as follows. Intracerebroventricular injection paralyzes mice. Has no effect on voltage-gated sodium currents. This is U3-theraphotoxin-Hs1a from Cyriopagopus schmidti (Chinese bird spider).